The sequence spans 121 residues: NAD(P)H-quinone oxidoreductase subunit M (121 aa).

The protein belongs to the complex I NdhM subunit family. In terms of assembly, NDH-1 can be composed of about 15 different subunits; different subcomplexes with different compositions have been identified which probably have different functions.

It localises to the cellular thylakoid membrane. It catalyses the reaction a plastoquinone + NADH + (n+1) H(+)(in) = a plastoquinol + NAD(+) + n H(+)(out). The enzyme catalyses a plastoquinone + NADPH + (n+1) H(+)(in) = a plastoquinol + NADP(+) + n H(+)(out). Its function is as follows. NDH-1 shuttles electrons from an unknown electron donor, via FMN and iron-sulfur (Fe-S) centers, to quinones in the respiratory and/or the photosynthetic chain. The immediate electron acceptor for the enzyme in this species is believed to be plastoquinone. Couples the redox reaction to proton translocation, and thus conserves the redox energy in a proton gradient. Cyanobacterial NDH-1 also plays a role in inorganic carbon-concentration. The sequence is that of NAD(P)H-quinone oxidoreductase subunit M from Synechococcus sp. (strain JA-3-3Ab) (Cyanobacteria bacterium Yellowstone A-Prime).